A 243-amino-acid polypeptide reads, in one-letter code: MLVMPAIDLREGRCVRLYQGRIEAETVYSTDPVAVARGWVERGARWLHVVDLDGAFAGRPRNLEVIAAIIRAAGVPVQVGGGIRSLESLAGVLAAGASRVVLGTVAITNPEVVATAVERYGERVVVGIDSLDGQVAIEGWEATVARGAVEFARQMASLGVTRAVFTDIGRDGTLQGPNIAATREMARSGGLKIIASGGIASLDDLRKLKELAAEGVEGAILGRSLYNGNFTLEEALAVAADGD.

The active-site Proton acceptor is Asp8. Asp129 acts as the Proton donor in catalysis.

It belongs to the HisA/HisF family.

Its subcellular location is the cytoplasm. It catalyses the reaction 1-(5-phospho-beta-D-ribosyl)-5-[(5-phospho-beta-D-ribosylamino)methylideneamino]imidazole-4-carboxamide = 5-[(5-phospho-1-deoxy-D-ribulos-1-ylimino)methylamino]-1-(5-phospho-beta-D-ribosyl)imidazole-4-carboxamide. It participates in amino-acid biosynthesis; L-histidine biosynthesis; L-histidine from 5-phospho-alpha-D-ribose 1-diphosphate: step 4/9. This is 1-(5-phosphoribosyl)-5-[(5-phosphoribosylamino)methylideneamino] imidazole-4-carboxamide isomerase from Moorella thermoacetica (strain ATCC 39073 / JCM 9320).